A 436-amino-acid polypeptide reads, in one-letter code: MAVNLSRNGPALQEAYVRVVTEKSPTDWALFTYEGNSNDIRVAGTGEGGLEELVEELNSGKVMYAFCRVKDPNSGLPKFVLINWTGEGVNDVRKGACANHVSTMANFLKGAHVTINARAEEDVEPECIMEKVAKASGANYSFHKESTSFQDVGPQAPVGSVYQKTNAISEIKRVGKDNFWAKAEKEEENRRLEEKRRAEEERQRLEEERRERELQEAARREQRYQEQHRSAGAPSPSSRTGEPEQEAVSRTRQEWESAGQQAPHPREIFKQKERAMSTTSVTSSQPGKLRSPFLQKQLTQPETSYGREPTAPVSRPAAGVCEEPAPSTLSSAQTEEEPTYEVPPEQDTLYEEPPLVQQQGAGSEHIDNYMQSQGFSGQGLCARALYDYQAADDTEISFDPENLITGIEVIDEGWWRGYGPDGHFGMFPANYVELIE.

Positions 2 to 133 constitute an ADF-H domain; that stretch reads AVNLSRNGPA…EPECIMEKVA (132 aa). Threonine 26 is subject to Phosphothreonine. Serine 160 carries the post-translational modification Phosphoserine. Position 176 is an N6-acetyllysine (lysine 176). A coiled-coil region spans residues 179–233; the sequence is FWAKAEKEEENRRLEEKRRAEEERQRLEEERRERELQEAARREQRYQEQHRSAGA. 2 stretches are compositionally biased toward basic and acidic residues: residues 185–229 and 264–275; these read KEEE…EQHR and HPREIFKQKERA. The tract at residues 185-341 is disordered; that stretch reads KEEENRRLEE…AQTEEEPTYE (157 aa). Over residues 276 to 286 the composition is skewed to polar residues; that stretch reads MSTTSVTSSQP. Phosphoserine occurs at positions 277, 280, 283, and 291. Residues 294–303 are compositionally biased toward polar residues; that stretch reads LQKQLTQPET. Lysine 296 carries the post-translational modification N6-acetyllysine. Residue threonine 299 is modified to Phosphothreonine. Residues tyrosine 340 and tyrosine 350 each carry the phosphotyrosine modification. The region spanning 377–436 is the SH3 domain; it reads GQGLCARALYDYQAADDTEISFDPENLITGIEVIDEGWWRGYGPDGHFGMFPANYVELIE.

The protein belongs to the ABP1 family. As to quaternary structure, interacts with SHANK3, SYN1 and PRAM1. Interacts with SHANK2. Interacts with FGD1, DNM1 and MAP4K1. Interacts with ANKRD54. Interacts with COBL. Interacts with WASL and WIPF1. Detected in hippocampus neurons and in the Purkinje cell layer in cerebellum (at protein level). Predominantly expressed in brain, thymus and spleen. Also found in testis, heart and lung. Little or no expression detected in ovary or muscle.

Its subcellular location is the cytoplasm. It localises to the cytoskeleton. It is found in the cell projection. The protein localises to the lamellipodium. The protein resides in the ruffle. Its subcellular location is the cell cortex. It localises to the cytosol. It is found in the synapse. The protein localises to the perikaryon. The protein resides in the neuron projection. Its subcellular location is the cell membrane. It localises to the cytoplasmic vesicle. It is found in the clathrin-coated vesicle membrane. The protein localises to the golgi apparatus membrane. The protein resides in the podosome. Its subcellular location is the early endosome. It localises to the dendrite. It is found in the postsynaptic density. Adapter protein that binds F-actin and DNM1, and thereby plays a role in receptor-mediated endocytosis. Plays a role in the reorganization of the actin cytoskeleton, formation of cell projections, such as neurites, in neuron morphogenesis and synapse formation via its interaction with WASL and COBL. Does not bind G-actin and promote actin polymerization by itself. Required for the formation of organized podosome rosettes. May act as a common effector of antigen receptor-signaling pathways in leukocytes. Acts as a key component of the immunological synapse that regulates T-cell activation by bridging TCRs and the actin cytoskeleton to gene activation and endocytic processes. This is Drebrin-like protein from Mus musculus (Mouse).